We begin with the raw amino-acid sequence, 876 residues long: MGDSDDEYDRRRRDKFRRERSDYDRSRERDERRRGDDWNDREWDRGRERRSRGEYRDYDRNRRERFSPPRHELSPPQKRMRRDWDEHSSDPYHSGYEMPYAGGGGGPTYGPPQPWGHPDVHIMQHHVLPIQARLGSIAEIDLGVPPPVMKTFKEFLLSLDDSVDETEAVKRYNDYKLDFRRQQMQDFFLAHKDEEWFRSKYHPDEVGKRRQEARGALQNRLRVFLSLMETGWFDNLLLDIDKADAIVKMLDAAVIKMEGGTENDLRILEQEEEEEQAGKPGEPSKKEEGRAGAGLGDGERKTNDKDEKKEDGKQAENDSSNDDKTKKSEGDGDKEEKKEDSEKEAKKSSKKRNRKHSGDDSFDEGSVSESESESESGQAEEEKEEAEEALKEKEKPKEEEWEKPKDAAGLECKPRPLHKTCSLFMRNIAPNISRAEIISLCKRYPGFMRVALSEPQPERRFFRRGWVTFDRSVNIKEICWNLQNIRLRECELSPGVNRDLTRRVRNINGITQHKQIVRNDIKLAAKLIHTLDDRTQLWASEPGTPPLPTSLPSQNPILKNITDYLIEEVSAEEEELLGSSGGAPPEEPPKEGNPAEINVERDEKLIKVLDKLLLYLRIVHSLDYYNTCEYPNEDEMPNRCGIIHVRGPMPPNRISHGEVLEWQKTFEEKLTPLLSVRESLSEEEAQKMGRKDPEQEVEKFVTSNTQELGKDKWLCPLSGKKFKGPEFVRKHIFNKHAEKIEEVKKEVAFFNNFLTDAKRPALPEIKPAQPPGPAQILPPGLTPGLPYPHQTPQGLMPYGQPRPPILGYGAGAVRPAVPTGGPPYPHAPYGAGRGNYDAFRGQGGYPGKPRNRMVRGDPRAIVEYRDLDAPDDVDFF.

The tract at residues 1–90 (MGDSDDEYDR…RRDWDEHSSD (90 aa)) is disordered. Gly2 carries the N-acetylglycine modification. Ser4 is subject to Phosphoserine. The residue at position 8 (Tyr8) is a Phosphotyrosine. Basic and acidic residues predominate over residues 8-73 (YDRRRRDKFR…ERFSPPRHEL (66 aa)). Phosphoserine is present on residues Ser67, Ser74, and Ser136. A Glycyl lysine isopeptide (Lys-Gly) (interchain with G-Cter in SUMO2) cross-link involves residue Lys150. The disordered stretch occupies residues 271–412 (EEEEEQAGKP…KPKDAAGLEC (142 aa)). Over residues 297 to 347 (DGERKTNDKDEKKEDGKQAENDSSNDDKTKKSEGDGDKEEKKEDSEKEAKK) the composition is skewed to basic and acidic residues. Over residues 370–387 (SESESESGQAEEEKEEAE) the composition is skewed to acidic residues. Over residues 388–412 (EALKEKEKPKEEEWEKPKDAAGLEC) the composition is skewed to basic and acidic residues. 2 positions are modified to phosphoserine: Ser493 and Ser540. Thr544 carries the post-translational modification Phosphothreonine. Phosphoserine is present on Ser570. The tract at residues 575-598 (ELLGSSGGAPPEEPPKEGNPAEIN) is disordered. At Thr671 the chain carries Phosphothreonine. Position 679 is a phosphoserine (Ser679). Omega-N-methylarginine is present on residues Arg833, Arg840, and Arg850. Residues 835 to 854 (NYDAFRGQGGYPGKPRNRMV) form a disordered region.

This sequence belongs to the ARS2 family. In terms of assembly, interacts with NCBP1 and DROSHA. Interacts with CASP8AP2 and ERBB4. Interacts with LUZP4. Interacts with NCBP2/CBP20 and NCBP3. Interacts with MTREX. In terms of tissue distribution, ubiquitously expressed.

It is found in the nucleus. Its subcellular location is the nucleoplasm. The protein localises to the cytoplasm. Its function is as follows. Acts as a mediator between the cap-binding complex (CBC) and the primary microRNAs (miRNAs) processing machinery during cell proliferation. Contributes to the stability and delivery of capped primary miRNA transcripts to the primary miRNA processing complex containing DGCR8 and DROSHA, thereby playing a role in RNA-mediated gene silencing (RNAi) by miRNAs. Binds capped RNAs (m7GpppG-capped RNA); however interaction is probably mediated via its interaction with NCBP1/CBP80 component of the CBC complex. Involved in cell cycle progression at S phase. Does not directly confer arsenite resistance but rather modulates arsenic sensitivity. Independently of its activity on miRNAs, necessary and sufficient to promote neural stem cell self-renewal. Does so by directly binding SOX2 promoter and positively regulating its transcription. The protein is Serrate RNA effector molecule homolog (SRRT) of Homo sapiens (Human).